Reading from the N-terminus, the 193-residue chain is ATP-dependent Clp protease proteolytic subunit (193 aa).

The Nucleophile role is filled by Ser98. Residue His123 is part of the active site.

This sequence belongs to the peptidase S14 family. As to quaternary structure, fourteen ClpP subunits assemble into 2 heptameric rings which stack back to back to give a disk-like structure with a central cavity, resembling the structure of eukaryotic proteasomes.

It localises to the cytoplasm. It catalyses the reaction Hydrolysis of proteins to small peptides in the presence of ATP and magnesium. alpha-casein is the usual test substrate. In the absence of ATP, only oligopeptides shorter than five residues are hydrolyzed (such as succinyl-Leu-Tyr-|-NHMec, and Leu-Tyr-Leu-|-Tyr-Trp, in which cleavage of the -Tyr-|-Leu- and -Tyr-|-Trp bonds also occurs).. In terms of biological role, cleaves peptides in various proteins in a process that requires ATP hydrolysis. Has a chymotrypsin-like activity. Plays a major role in the degradation of misfolded proteins. ClpXP is involved in the complete degradation of the Site-2 clipped anti-sigma-W factor RsiW. This results in the release of SigW and the transcription activation of the genes under the control of the sigma-W factor. In Oceanobacillus iheyensis (strain DSM 14371 / CIP 107618 / JCM 11309 / KCTC 3954 / HTE831), this protein is ATP-dependent Clp protease proteolytic subunit.